We begin with the raw amino-acid sequence, 650 residues long: Chaperone protein HtpG (650 aa).

The interval 1 to 349 (MTKTTKKFET…SSDLPLNVSR (349 aa)) is a; substrate-binding. The segment at 350-566 (EILQEDVQIK…EHGLNANMER (217 aa)) is b. Residues 567–650 (ILRAMNQDVP…VADGKAAAGE (84 aa)) are c.

The protein belongs to the heat shock protein 90 family. In terms of assembly, homodimer.

The protein resides in the cytoplasm. In terms of biological role, molecular chaperone. Has ATPase activity. This chain is Chaperone protein HtpG, found in Geobacter metallireducens (strain ATCC 53774 / DSM 7210 / GS-15).